Consider the following 301-residue polypeptide: uncharacterized protein (301 aa).

This sequence belongs to the asfivirus E301R family. In terms of assembly, interacts with host IRF3.

In terms of biological role, plays a role in the inhibition of host innate immune system by acting as a negatively regulator of type I interferon production. Mechanistically, interacts with and prevents host IRF3 nuclear localization to inhibit its transcriptional activity. This is an uncharacterized protein from African swine fever virus (isolate Pig/Kenya/KEN-50/1950) (ASFV).